Reading from the N-terminus, the 904-residue chain is Phosphoenolpyruvate carboxylase (904 aa).

Catalysis depends on residues His-151 and Lys-570.

This sequence belongs to the PEPCase type 1 family. It depends on Mg(2+) as a cofactor.

It carries out the reaction oxaloacetate + phosphate = phosphoenolpyruvate + hydrogencarbonate. Forms oxaloacetate, a four-carbon dicarboxylic acid source for the tricarboxylic acid cycle. The sequence is that of Phosphoenolpyruvate carboxylase from Xanthomonas campestris pv. campestris (strain ATCC 33913 / DSM 3586 / NCPPB 528 / LMG 568 / P 25).